We begin with the raw amino-acid sequence, 178 residues long: Deoxycytidylate deaminase (178 aa).

Positions 14-146 (EWPEYFMAVA…EATAARLLFD (133 aa)) constitute a CMP/dCMP-type deaminase domain. His-84 contributes to the Zn(2+) binding site. The active-site Proton donor is the Glu-86. Residues Cys-110 and Cys-113 each coordinate Zn(2+). Position 174 is a phosphoserine (Ser-174).

Belongs to the cytidine and deoxycytidylate deaminase family. In terms of assembly, homohexamer. The cofactor is Zn(2+).

The enzyme catalyses dCMP + H2O + H(+) = dUMP + NH4(+). It carries out the reaction 5-hydroxymethyl-dCMP + H2O + H(+) = 5-hydroxymethyl-dUMP + NH4(+). Allosteric enzyme whose activity is greatly influenced by the end products of its metabolic pathway, dCTP and dTTP. In terms of biological role, catalyzes the deamination of dCMP to dUMP, providing the nucleoside monophosphate substrate for the thymidylate synthase/TYMS. Also, part of a nucleotide salvage pathway that eliminates epigenetically modified 5-hydroxymethyl-dCMP (hmdCMP) in a two-step process entailing deamination to cytotoxic 5-hydroxymethyl-dUMP (hmdUMP), followed by its hydrolysis into 5-hydroxymethyluracil (hmU) and 2-deoxy-D-ribose 5-phosphate (deoxyribosephosphate). Catalyzes the first step in that pathway, the deamination of 5-hydroxymethyl-dCMP (hmdCMP). The polypeptide is Deoxycytidylate deaminase (Pongo abelii (Sumatran orangutan)).